The primary structure comprises 225 residues: Ribonuclease 3 (225 aa).

One can recognise an RNase III domain in the interval 7 to 132 (MKAFEARLGY…VIAAVYRDGG (126 aa)). Glu45 contacts Mg(2+). Asp49 is an active-site residue. Mg(2+)-binding residues include Asp118 and Glu121. The active site involves Glu121. The DRBM domain maps to 157–225 (DAKTALQEWA…AARKLLDSLD (69 aa)).

The protein belongs to the ribonuclease III family. Homodimer. Mg(2+) is required as a cofactor.

It is found in the cytoplasm. The catalysed reaction is Endonucleolytic cleavage to 5'-phosphomonoester.. In terms of biological role, digests double-stranded RNA. Involved in the processing of primary rRNA transcript to yield the immediate precursors to the large and small rRNAs (23S and 16S). Processes some mRNAs, and tRNAs when they are encoded in the rRNA operon. Processes pre-crRNA and tracrRNA of type II CRISPR loci if present in the organism. The sequence is that of Ribonuclease 3 from Ruegeria pomeroyi (strain ATCC 700808 / DSM 15171 / DSS-3) (Silicibacter pomeroyi).